The primary structure comprises 332 residues: Methionyl-tRNA formyltransferase (332 aa).

124–127 (SLLP) serves as a coordination point for (6S)-5,6,7,8-tetrahydrofolate.

Belongs to the Fmt family.

It catalyses the reaction L-methionyl-tRNA(fMet) + (6R)-10-formyltetrahydrofolate = N-formyl-L-methionyl-tRNA(fMet) + (6S)-5,6,7,8-tetrahydrofolate + H(+). Functionally, attaches a formyl group to the free amino group of methionyl-tRNA(fMet). The formyl group appears to play a dual role in the initiator identity of N-formylmethionyl-tRNA by promoting its recognition by IF2 and preventing the misappropriation of this tRNA by the elongation apparatus. The protein is Methionyl-tRNA formyltransferase of Polynucleobacter necessarius subsp. necessarius (strain STIR1).